We begin with the raw amino-acid sequence, 766 residues long: Phosphoribosylformylglycinamidine synthase subunit PurL (766 aa).

H66 is an active-site residue. Y69 and K113 together coordinate ATP. E115 lines the Mg(2+) pocket. Substrate-binding positions include 116–119 and R138; that span reads SHNH. H117 acts as the Proton acceptor in catalysis. D139 is a binding site for Mg(2+). Q264 provides a ligand contact to substrate. D292 contributes to the Mg(2+) binding site. 336–338 contributes to the substrate binding site; sequence ESQ. Residues N524 and G561 each contribute to the ATP site. N562 lines the Mg(2+) pocket. S564 is a binding site for substrate.

Belongs to the FGAMS family. As to quaternary structure, monomer. Part of the FGAM synthase complex composed of 1 PurL, 1 PurQ and 2 PurS subunits.

It is found in the cytoplasm. The catalysed reaction is N(2)-formyl-N(1)-(5-phospho-beta-D-ribosyl)glycinamide + L-glutamine + ATP + H2O = 2-formamido-N(1)-(5-O-phospho-beta-D-ribosyl)acetamidine + L-glutamate + ADP + phosphate + H(+). It participates in purine metabolism; IMP biosynthesis via de novo pathway; 5-amino-1-(5-phospho-D-ribosyl)imidazole from N(2)-formyl-N(1)-(5-phospho-D-ribosyl)glycinamide: step 1/2. Part of the phosphoribosylformylglycinamidine synthase complex involved in the purines biosynthetic pathway. Catalyzes the ATP-dependent conversion of formylglycinamide ribonucleotide (FGAR) and glutamine to yield formylglycinamidine ribonucleotide (FGAM) and glutamate. The FGAM synthase complex is composed of three subunits. PurQ produces an ammonia molecule by converting glutamine to glutamate. PurL transfers the ammonia molecule to FGAR to form FGAM in an ATP-dependent manner. PurS interacts with PurQ and PurL and is thought to assist in the transfer of the ammonia molecule from PurQ to PurL. In Mycobacterium tuberculosis (strain CDC 1551 / Oshkosh), this protein is Phosphoribosylformylglycinamidine synthase subunit PurL.